The sequence spans 91 residues: ATP synthase subunit c 1 (91 aa).

Helical transmembrane passes span 4–24 (FTMCVFGAAIGMAIGTLGTAI) and 53–73 (IGLAMIESLAIYALVVCLIIL).

The protein belongs to the ATPase C chain family. F-type ATPases have 2 components, F(1) - the catalytic core - and F(0) - the membrane proton channel. F(1) has five subunits: alpha(3), beta(3), gamma(1), delta(1), epsilon(1). F(0) has three main subunits: a(1), b(2) and c(10-14). The alpha and beta chains form an alternating ring which encloses part of the gamma chain. F(1) is attached to F(0) by a central stalk formed by the gamma and epsilon chains, while a peripheral stalk is formed by the delta and b chains.

The protein resides in the cell inner membrane. In terms of biological role, f(1)F(0) ATP synthase produces ATP from ADP in the presence of a proton or sodium gradient. F-type ATPases consist of two structural domains, F(1) containing the extramembraneous catalytic core and F(0) containing the membrane proton channel, linked together by a central stalk and a peripheral stalk. During catalysis, ATP synthesis in the catalytic domain of F(1) is coupled via a rotary mechanism of the central stalk subunits to proton translocation. Functionally, key component of the F(0) channel; it plays a direct role in translocation across the membrane. A homomeric c-ring of between 10-14 subunits forms the central stalk rotor element with the F(1) delta and epsilon subunits. The chain is ATP synthase subunit c 1 from Pelobacter propionicus (strain DSM 2379 / NBRC 103807 / OttBd1).